A 450-amino-acid polypeptide reads, in one-letter code: Putative MYST-like histone acetyltransferase 1 (450 aa).

The region spanning 63–122 (LEVGTRVMCRWRDQKLHPVKVIERRKSSTSSSPADYEYYVHYTEFNRRLDEWVKLEQLDL) is the Tudor-knot domain. Residues 174-445 (TKVKNIAKIE…VDVSKLIWTP (272 aa)) enclose the MYST-type HAT domain. The C2HC MYST-type zinc-finger motif lies at 207–232 (LFFCEFCLNFMKRKEQLQRHMKKCDL). The residue at position 274 (lysine 274) is an N6-acetyllysine; by autocatalysis. Residues 317 to 319 (ILT) and 324 to 330 (QRKGYGK) contribute to the acetyl-CoA site. Glutamate 350 serves as the catalytic Proton donor/acceptor. Serine 354 serves as a coordination point for acetyl-CoA.

Belongs to the MYST (SAS/MOZ) family. Post-translationally, autoacetylation at Lys-274 is required for proper function.

Its subcellular location is the nucleus. It carries out the reaction L-lysyl-[protein] + acetyl-CoA = N(6)-acetyl-L-lysyl-[protein] + CoA + H(+). Functionally, histone acetyltransferase which may be involved in transcriptional activation. The polypeptide is Putative MYST-like histone acetyltransferase 1 (Oryza sativa subsp. japonica (Rice)).